The sequence spans 273 residues: WAP four-disulfide core domain protein 8 (273 aa).

Residues Leu45–Leu65 traverse the membrane as a helical segment. A WAP 1 domain is found at Ile76–Tyr123. Disulfide bonds link Cys83-Cys111, Cys90-Cys115, Cys98-Cys110, Cys104-Cys119, Cys127-Cys177, Cys136-Cys160, Cys152-Cys173, Cys186-Cys214, Cys197-Cys218, Cys201-Cys213, Cys207-Cys222, Cys233-Cys261, Cys240-Cys264, Cys248-Cys260, and Cys254-Cys268. In terms of domain architecture, BPTI/Kunitz inhibitor spans Cys127–Cys177. WAP domains are found at residues Phe179–Trp226 and Val228–Arg272.

The protein resides in the membrane. This Mus musculus (Mouse) protein is WAP four-disulfide core domain protein 8 (Wfdc8).